The primary structure comprises 575 residues: Alpha-(1,6)-fucosyltransferase (575 aa).

Over 1-9 the chain is Cytoplasmic; it reads MRAWTGSWR. Residues 10-30 traverse the membrane as a helical; Signal-anchor for type II membrane protein segment; the sequence is WIMLILFAWGTLLFYIGGHLV. The Lumenal segment spans residues 31–575; the sequence is RDNDHPDHSS…KYPTYPEAEK (545 aa). 3 disulfide bridges follow: cysteine 204–cysteine 266, cysteine 212–cysteine 230, and cysteine 218–cysteine 222. Residues 206 to 493 enclose the GT23 domain; the sequence is KARKLVCNIN…PDASANFHSL (288 aa). Serine 278 is subject to Phosphoserine. Positions 299–305 match the SH3-binding motif; the sequence is PRPPYLP. Positions 365–366 are important for donor substrate binding; that stretch reads RR. The cysteines at positions 465 and 472 are disulfide-linked. Positions 502-563 constitute an SH3 domain; it reads QNAHNQIAVY…PSYKVREKIE (62 aa).

This sequence belongs to the glycosyltransferase 23 family. Post-translationally, tyrosine phosphorylated by PKDCC/VLK.

It is found in the golgi apparatus. The protein resides in the golgi stack membrane. It catalyses the reaction N(4)-{beta-D-GlcNAc-(1-&gt;2)-alpha-D-Man-(1-&gt;3)-[beta-D-GlcNAc-(1-&gt;2)-alpha-D-Man-(1-&gt;6)]-beta-D-Man-(1-&gt;4)-beta-D-GlcNAc-(1-&gt;4)-beta-D-GlcNAc}-L-asparaginyl-[protein] + GDP-beta-L-fucose = an N(4)-{beta-D-GlcNAc-(1-&gt;2)-alpha-D-Man-(1-&gt;3)-[beta-D-GlcNAc-(1-&gt;2)-alpha-D-Man-(1-&gt;6)]-beta-D-Man-(1-&gt;4)-beta-D-GlcNAc-(1-&gt;4)-[alpha-L-Fuc-(1-&gt;6)]-beta-D-GlcNAc}-L-asparaginyl-[protein] + GDP + H(+). Its pathway is protein modification; protein glycosylation. Catalyzes the addition of fucose in alpha 1-6 linkage to the first GlcNAc residue, next to the peptide chains in N-glycans. The polypeptide is Alpha-(1,6)-fucosyltransferase (Fut8) (Rattus norvegicus (Rat)).